The sequence spans 162 residues: ATP synthase subunit b (162 aa).

A helical transmembrane segment spans residues 6–25 (TLFTLVTFLVLMLAVGKVAW).

This sequence belongs to the ATPase B chain family. F-type ATPases have 2 components, F(1) - the catalytic core - and F(0) - the membrane proton channel. F(1) has five subunits: alpha(3), beta(3), gamma(1), delta(1), epsilon(1). F(0) has three main subunits: a(1), b(2) and c(10-14). The alpha and beta chains form an alternating ring which encloses part of the gamma chain. F(1) is attached to F(0) by a central stalk formed by the gamma and epsilon chains, while a peripheral stalk is formed by the delta and b chains.

The protein resides in the cell membrane. In terms of biological role, f(1)F(0) ATP synthase produces ATP from ADP in the presence of a proton or sodium gradient. F-type ATPases consist of two structural domains, F(1) containing the extramembraneous catalytic core and F(0) containing the membrane proton channel, linked together by a central stalk and a peripheral stalk. During catalysis, ATP synthesis in the catalytic domain of F(1) is coupled via a rotary mechanism of the central stalk subunits to proton translocation. Component of the F(0) channel, it forms part of the peripheral stalk, linking F(1) to F(0). The chain is ATP synthase subunit b from Lacticaseibacillus paracasei (strain ATCC 334 / BCRC 17002 / CCUG 31169 / CIP 107868 / KCTC 3260 / NRRL B-441) (Lactobacillus paracasei).